Reading from the N-terminus, the 251-residue chain is MASEQENTADFGFRTVARDEKEVMVAEVFHSVAAKYDLMNDLMSFGIHRIWKRFTIECSGVRRNQRVLDLAGGTGDLTAKFSRMVGEGGEVILADINASMLKVGREKLRNKGIIDNISYVQANAEALPFPDDFFDCITISFGLRNVTDKNKALRSMYRVLKPGGRLLVLEFSKPIIKQLSTVYDAYSFHILPRIGEAVASDAGSYRYLAESIRMHPDQETLKGMMSDAGFDSVNYFNLTGGIVALHRGFKF.

S-adenosyl-L-methionine contacts are provided by residues Thr-74, Asp-95, 123-124 (NA), and Ser-140.

Belongs to the class I-like SAM-binding methyltransferase superfamily. MenG/UbiE family.

It catalyses the reaction a 2-demethylmenaquinol + S-adenosyl-L-methionine = a menaquinol + S-adenosyl-L-homocysteine + H(+). The catalysed reaction is a 2-methoxy-6-(all-trans-polyprenyl)benzene-1,4-diol + S-adenosyl-L-methionine = a 5-methoxy-2-methyl-3-(all-trans-polyprenyl)benzene-1,4-diol + S-adenosyl-L-homocysteine + H(+). Its pathway is quinol/quinone metabolism; menaquinone biosynthesis; menaquinol from 1,4-dihydroxy-2-naphthoate: step 2/2. It participates in cofactor biosynthesis; ubiquinone biosynthesis. In terms of biological role, methyltransferase required for the conversion of demethylmenaquinol (DMKH2) to menaquinol (MKH2) and the conversion of 2-polyprenyl-6-methoxy-1,4-benzoquinol (DDMQH2) to 2-polyprenyl-3-methyl-6-methoxy-1,4-benzoquinol (DMQH2). This is Ubiquinone/menaquinone biosynthesis C-methyltransferase UbiE from Pectobacterium carotovorum subsp. carotovorum (strain PC1).